Reading from the N-terminus, the 503-residue chain is Na(+)-translocating NADH-quinone reductase subunit B (503 aa).

5 helical membrane-spanning segments follow: residues 55–75, 94–114, 120–140, 161–181, and 186–206; these read MMLV…NSGL, ISGF…VPIL, IFIP…VLFA, TLPP…GIVV, and FGGT…FLFF. An FMN phosphoryl threonine modification is found at threonine 248. 5 helical membrane-spanning segments follow: residues 361 to 381, 386 to 406, 417 to 437, 452 to 472, and 475 to 495; these read TSTF…IASW, AFGI…VLIV, FFIP…LVFM, WIYG…NPAY, and GVML…YFAV.

This sequence belongs to the NqrB/RnfD family. Composed of six subunits; NqrA, NqrB, NqrC, NqrD, NqrE and NqrF. FMN serves as cofactor.

It is found in the cell inner membrane. The catalysed reaction is a ubiquinone + n Na(+)(in) + NADH + H(+) = a ubiquinol + n Na(+)(out) + NAD(+). In terms of biological role, NQR complex catalyzes the reduction of ubiquinone-1 to ubiquinol by two successive reactions, coupled with the transport of Na(+) ions from the cytoplasm to the periplasm. NqrA to NqrE are probably involved in the second step, the conversion of ubisemiquinone to ubiquinol. This chain is Na(+)-translocating NADH-quinone reductase subunit B, found in Chlamydia pneumoniae (Chlamydophila pneumoniae).